A 665-amino-acid chain; its full sequence is MGRIRVLSDQVANQIAAGEVVDRPASVVKELLENAIDAEATRIRVEVEAGGRKLIRVTDNGIGMMRDDAMLAFERHATSKIRSSDDLLTIATLGFRGEALPSIASISRLEMITRAQGEETGTCIEIAGGKMLRVEDAGAPPGTSFTIRDLFYNTPARRKFLKAESTELSHVSALVTHYALAHPDKHFELHSATHALLNAPPVNEPSERVFQIFGAETLNQLIPMAAERPFDRAGLPEPPPWRRDQDYEPPDPGFLRVKGFISKPALQKLNRNSIYIFINRRLVRDRLILHAITEGYRNIIPPTSFPVALLFLEMPPHEVDVNVHPAKTEVRFRQSSVLHDFLRDSIRNALMKARPAADFLAALSASEPVSSVLPTATPVQDSEVIPAGSEAAGEVAAFALTEPVLPSVEQPLPFARAEMTVPQVQGAAGSAPAPPAYPAVAGAAARVPGGNCGHDAGPEEIPPPGGEAGTLASLASLKPLGQLRESFILAVNDEGFWIIDQHVAHERVLFEKILREREVERVHRQRLLMPLLLDLLPHQMVRFAEIAQELERNGFEAEPFGPHTIAIKASPVGLEGARLERMLVEVLEQTGTGTQSENLETVRTRIAASIACHSAIKINTPLDPQRMEWLLAELARTAHPTSCPHGRPIALRYSWKDIQRAFERI.

This sequence belongs to the DNA mismatch repair MutL/HexB family.

Functionally, this protein is involved in the repair of mismatches in DNA. It is required for dam-dependent methyl-directed DNA mismatch repair. May act as a 'molecular matchmaker', a protein that promotes the formation of a stable complex between two or more DNA-binding proteins in an ATP-dependent manner without itself being part of a final effector complex. The protein is DNA mismatch repair protein MutL of Acidobacterium capsulatum (strain ATCC 51196 / DSM 11244 / BCRC 80197 / JCM 7670 / NBRC 15755 / NCIMB 13165 / 161).